Reading from the N-terminus, the 272-residue chain is Rhomboid-type serine protease B (272 aa).

A run of 6 helical transmembrane segments spans residues 30 to 50 (LVLLVILAFWLLELQTIWSVV), 72 to 92 (PFIHVGFFHAFVNLLALTPLL), 103 to 123 (TAVALFIGPLSTFPAGIYILV), 133 to 153 (AVVGASVWIFLLLGSEAIKTF), 164 to 184 (TKIPTWTSPLFACALVSIFVP), and 186 to 206 (TSFLGHLSAIIIGYLLGLGYL). The active-site Nucleophile is serine 138. Histidine 191 is a catalytic residue.

The protein belongs to the peptidase S54 family.

It localises to the membrane. The catalysed reaction is Cleaves type-1 transmembrane domains using a catalytic dyad composed of serine and histidine that are contributed by different transmembrane domains.. Rhomboid protease that catalyzes intramembrane proteolysis. Required for transcription factor srbA activation by mediating its release from the membrane and thereby regulating its activity under hypoxic conditions. Essential for iron homeostasis and resistance to azoles such as voriconazole. Required for virulence in murine models of invasive pulmonary aspergillosis (IPA). In Aspergillus fumigatus (strain ATCC MYA-4609 / CBS 101355 / FGSC A1100 / Af293) (Neosartorya fumigata), this protein is Rhomboid-type serine protease B.